A 375-amino-acid polypeptide reads, in one-letter code: Pectate lyase B (375 aa).

A signal peptide spans 1-22 (MKSLITPIAAGLLLAFSQYSLA). Cysteines 93 and 176 form a disulfide. Ca(2+)-binding residues include D150, D152, E187, and D191. R240 is an active-site residue. A disulfide bond links C351 and C374.

It belongs to the polysaccharide lyase 1 family. PLADES subfamily. It depends on Ca(2+) as a cofactor.

Its subcellular location is the secreted. The enzyme catalyses Eliminative cleavage of (1-&gt;4)-alpha-D-galacturonan to give oligosaccharides with 4-deoxy-alpha-D-galact-4-enuronosyl groups at their non-reducing ends.. It functions in the pathway glycan metabolism; pectin degradation; 2-dehydro-3-deoxy-D-gluconate from pectin: step 2/5. Its function is as follows. Involved in maceration and soft-rotting of plant tissue. This is Pectate lyase B (pelB) from Dickeya chrysanthemi (Pectobacterium chrysanthemi).